The chain runs to 450 residues: MKKVFVKTYGCQMNEYDSDKMVDVLNASQGLEATDNVEDADVILFNTCSVREKAQEKVFSELGRMKALKAVKPDLVIGVGGCVASQEGASIVSRAPYVDVVFGPQTLHRLPDLIARRQRTGQSQVDISFPEIEKFDHLPPARVEGPSAFVSIMEGCSKYCSYCVVPYTRGEEVSRPFEDVLAEVAGLAEQGVREVTLLGQNVNAYRGKMGDTSEIADFALLIEYVAEIPGIERIRYTTSHPKEFTSRLVELYGRCDKLVNHLHLPVQHASDRILMAMKRGYSVLEYKSIIRRLRALRPDMSMSSDFIVGFPGETDADFDKLMAMIEEIGYDTSFSFIFSPRPGTPAANLHDDTPREVKLQRLQRLQATIEENVQRISQGMVGTVQRILVEGPARKDPTELHGRTENNRVVNFALPGVPQAGRDRLVGQLVDVSITQAFPHSLRGEIVVRQ.

One can recognise an MTTase N-terminal domain in the interval 2-119 (KKVFVKTYGC…LPDLIARRQR (118 aa)). [4Fe-4S] cluster is bound by residues Cys11, Cys48, Cys82, Cys156, Cys160, and Cys163. A Radical SAM core domain is found at 142-375 (RVEGPSAFVS…QATIEENVQR (234 aa)). One can recognise a TRAM domain in the interval 378–448 (QGMVGTVQRI…PHSLRGEIVV (71 aa)).

The protein belongs to the methylthiotransferase family. MiaB subfamily. Monomer. Requires [4Fe-4S] cluster as cofactor.

Its subcellular location is the cytoplasm. The enzyme catalyses N(6)-dimethylallyladenosine(37) in tRNA + (sulfur carrier)-SH + AH2 + 2 S-adenosyl-L-methionine = 2-methylsulfanyl-N(6)-dimethylallyladenosine(37) in tRNA + (sulfur carrier)-H + 5'-deoxyadenosine + L-methionine + A + S-adenosyl-L-homocysteine + 2 H(+). Functionally, catalyzes the methylthiolation of N6-(dimethylallyl)adenosine (i(6)A), leading to the formation of 2-methylthio-N6-(dimethylallyl)adenosine (ms(2)i(6)A) at position 37 in tRNAs that read codons beginning with uridine. The protein is tRNA-2-methylthio-N(6)-dimethylallyladenosine synthase of Cupriavidus taiwanensis (strain DSM 17343 / BCRC 17206 / CCUG 44338 / CIP 107171 / LMG 19424 / R1) (Ralstonia taiwanensis (strain LMG 19424)).